We begin with the raw amino-acid sequence, 91 residues long: Small ribosomal subunit protein uS19 (91 aa).

Belongs to the universal ribosomal protein uS19 family.

Protein S19 forms a complex with S13 that binds strongly to the 16S ribosomal RNA. This is Small ribosomal subunit protein uS19 from Methylibium petroleiphilum (strain ATCC BAA-1232 / LMG 22953 / PM1).